The chain runs to 441 residues: Serine carboxypeptidase-like 1 (441 aa).

An N-terminal signal peptide occupies residues 1-29 (MANKYVSSVLKSLLVLLHLVFLSKQHVDS). Cystine bridges form between cysteine 88/cysteine 331, cysteine 252/cysteine 266, and cysteine 290/cysteine 297. An N-linked (GlcNAc...) asparagine glycan is attached at asparagine 109. Residue serine 184 is part of the active site. The N-linked (GlcNAc...) asparagine glycan is linked to asparagine 350. Residue aspartate 366 is part of the active site. The N-linked (GlcNAc...) asparagine glycan is linked to asparagine 382. Histidine 419 is a catalytic residue.

Belongs to the peptidase S10 family. In terms of tissue distribution, expressed in seedlings and roots.

The protein resides in the secreted. Probable carboxypeptidase. In Arabidopsis thaliana (Mouse-ear cress), this protein is Serine carboxypeptidase-like 1 (SCPL1).